The sequence spans 249 residues: MIELGVNIDHVATLRQARRTWEPDPTWAAVEAHLGGADGITVHLREDRRHIQDDDVRRLRELTQIKLNLEMAATDEMVGIARSIKPEMAMLVPEGRHEVTTEGGLDIVSQEARLKDVIARLADAGIVTSVFIDAEIAQIDAAARIGARVCEIHTGPYAHAFHAQGRDAESPAVLAEIDKIRRAGEAICSHGMRFNAGHALNYYNVQPIARLPGIRELHIGHAIVSRAVFSGIREAVAEMKRLMREAAAG.

N7 serves as a coordination point for 3-amino-2-oxopropyl phosphate. 9 to 10 (DH) is a 1-deoxy-D-xylulose 5-phosphate binding site. R18 provides a ligand contact to 3-amino-2-oxopropyl phosphate. H43 serves as the catalytic Proton acceptor. 2 residues coordinate 1-deoxy-D-xylulose 5-phosphate: R45 and H50. E70 (proton acceptor) is an active-site residue. T100 provides a ligand contact to 1-deoxy-D-xylulose 5-phosphate. The active-site Proton donor is the H198. Residues A199 and 220-221 (GH) each bind 3-amino-2-oxopropyl phosphate.

The protein belongs to the PNP synthase family. Homooctamer; tetramer of dimers.

Its subcellular location is the cytoplasm. The catalysed reaction is 3-amino-2-oxopropyl phosphate + 1-deoxy-D-xylulose 5-phosphate = pyridoxine 5'-phosphate + phosphate + 2 H2O + H(+). Its pathway is cofactor biosynthesis; pyridoxine 5'-phosphate biosynthesis; pyridoxine 5'-phosphate from D-erythrose 4-phosphate: step 5/5. In terms of biological role, catalyzes the complicated ring closure reaction between the two acyclic compounds 1-deoxy-D-xylulose-5-phosphate (DXP) and 3-amino-2-oxopropyl phosphate (1-amino-acetone-3-phosphate or AAP) to form pyridoxine 5'-phosphate (PNP) and inorganic phosphate. This chain is Pyridoxine 5'-phosphate synthase, found in Azoarcus sp. (strain BH72).